The following is a 554-amino-acid chain: Intraflagellar transport protein 56 (554 aa).

The disordered stretch occupies residues 1–23 (MMLSRAKPAVGNEVQQIDKKKKK). 4 TPR repeats span residues 57–90 (EDTE…EGCN), 92–125 (DVWV…LQNR), 151–184 (IEDQ…NRDF), and 468–501 (ANDC…EGKR).

This sequence belongs to the IFT56 family. As to quaternary structure, component of the IFT complex B.

The protein localises to the cell projection. The protein resides in the cilium. Component of the intraflagellar transport (IFT) complex B required for transport of proteins in the motile cilium. Required for transport of specific ciliary cargo proteins related to motility, while it is neither required for IFT complex B assembly or motion nor for cilium assembly. Plays a key role in maintaining the integrity of the IFT complex B and the proper ciliary localization of the IFT complex B components. Essential for maintaining proper microtubule organization within the ciliary axoneme. This chain is Intraflagellar transport protein 56, found in Xenopus tropicalis (Western clawed frog).